The following is a 163-amino-acid chain: Crossover junction endodeoxyribonuclease RuvC (163 aa).

Catalysis depends on residues D4, E65, and D138. Mg(2+) is bound by residues D4, E65, and D138.

It belongs to the RuvC family. Homodimer which binds Holliday junction (HJ) DNA. The HJ becomes 2-fold symmetrical on binding to RuvC with unstacked arms; it has a different conformation from HJ DNA in complex with RuvA. In the full resolvosome a probable DNA-RuvA(4)-RuvB(12)-RuvC(2) complex forms which resolves the HJ. It depends on Mg(2+) as a cofactor.

The protein localises to the cytoplasm. The enzyme catalyses Endonucleolytic cleavage at a junction such as a reciprocal single-stranded crossover between two homologous DNA duplexes (Holliday junction).. Functionally, the RuvA-RuvB-RuvC complex processes Holliday junction (HJ) DNA during genetic recombination and DNA repair. Endonuclease that resolves HJ intermediates. Cleaves cruciform DNA by making single-stranded nicks across the HJ at symmetrical positions within the homologous arms, yielding a 5'-phosphate and a 3'-hydroxyl group; requires a central core of homology in the junction. The consensus cleavage sequence is 5'-(A/T)TT(C/G)-3'. Cleavage occurs on the 3'-side of the TT dinucleotide at the point of strand exchange. HJ branch migration catalyzed by RuvA-RuvB allows RuvC to scan DNA until it finds its consensus sequence, where it cleaves and resolves the cruciform DNA. The protein is Crossover junction endodeoxyribonuclease RuvC of Corynebacterium jeikeium (strain K411).